A 443-amino-acid chain; its full sequence is Thymidine phosphorylase (443 aa).

Belongs to the thymidine/pyrimidine-nucleoside phosphorylase family. As to quaternary structure, homodimer.

The enzyme catalyses thymidine + phosphate = 2-deoxy-alpha-D-ribose 1-phosphate + thymine. It functions in the pathway pyrimidine metabolism; dTMP biosynthesis via salvage pathway; dTMP from thymine: step 1/2. Its function is as follows. The enzymes which catalyze the reversible phosphorolysis of pyrimidine nucleosides are involved in the degradation of these compounds and in their utilization as carbon and energy sources, or in the rescue of pyrimidine bases for nucleotide synthesis. The protein is Thymidine phosphorylase of Shewanella sp. (strain MR-7).